The primary structure comprises 465 residues: GTPase Der (465 aa).

2 consecutive EngA-type G domains span residues P3–S167 and I179–L352. Residues G9–S16, D57–M61, N119–D122, G185–S192, D232–L236, and N297–D300 contribute to the GTP site. Residues R353–D437 enclose the KH-like domain.

This sequence belongs to the TRAFAC class TrmE-Era-EngA-EngB-Septin-like GTPase superfamily. EngA (Der) GTPase family. Associates with the 50S ribosomal subunit.

Its function is as follows. GTPase that plays an essential role in the late steps of ribosome biogenesis. This Xylella fastidiosa (strain M12) protein is GTPase Der.